We begin with the raw amino-acid sequence, 268 residues long: Hydroxyacylglutathione hydrolase (268 aa).

His-56, His-58, Asp-60, His-61, His-113, Asp-130, and His-168 together coordinate Zn(2+).

Belongs to the metallo-beta-lactamase superfamily. Glyoxalase II family. In terms of assembly, monomer. Requires Zn(2+) as cofactor.

The catalysed reaction is an S-(2-hydroxyacyl)glutathione + H2O = a 2-hydroxy carboxylate + glutathione + H(+). It participates in secondary metabolite metabolism; methylglyoxal degradation; (R)-lactate from methylglyoxal: step 2/2. Functionally, thiolesterase that catalyzes the hydrolysis of S-D-lactoyl-glutathione to form glutathione and D-lactic acid. The sequence is that of Hydroxyacylglutathione hydrolase from Hydrogenovibrio crunogenus (strain DSM 25203 / XCL-2) (Thiomicrospira crunogena).